A 215-amino-acid polypeptide reads, in one-letter code: ATP-dependent Clp protease proteolytic subunit 1 (215 aa).

Ser111 serves as the catalytic Nucleophile. Residue His136 is part of the active site.

The protein belongs to the peptidase S14 family. In terms of assembly, fourteen ClpP subunits assemble into 2 heptameric rings which stack back to back to give a disk-like structure with a central cavity, resembling the structure of eukaryotic proteasomes.

The protein resides in the cytoplasm. It catalyses the reaction Hydrolysis of proteins to small peptides in the presence of ATP and magnesium. alpha-casein is the usual test substrate. In the absence of ATP, only oligopeptides shorter than five residues are hydrolyzed (such as succinyl-Leu-Tyr-|-NHMec, and Leu-Tyr-Leu-|-Tyr-Trp, in which cleavage of the -Tyr-|-Leu- and -Tyr-|-Trp bonds also occurs).. In terms of biological role, cleaves peptides in various proteins in a process that requires ATP hydrolysis. Has a chymotrypsin-like activity. Plays a major role in the degradation of misfolded proteins. The protein is ATP-dependent Clp protease proteolytic subunit 1 of Gluconobacter oxydans (strain 621H) (Gluconobacter suboxydans).